The sequence spans 153 residues: NAD(P)H-quinone oxidoreductase subunit N (153 aa).

Belongs to the complex I NdhN subunit family. NDH-1 can be composed of about 15 different subunits; different subcomplexes with different compositions have been identified which probably have different functions.

It localises to the cellular thylakoid membrane. The catalysed reaction is a plastoquinone + NADH + (n+1) H(+)(in) = a plastoquinol + NAD(+) + n H(+)(out). It catalyses the reaction a plastoquinone + NADPH + (n+1) H(+)(in) = a plastoquinol + NADP(+) + n H(+)(out). Its function is as follows. NDH-1 shuttles electrons from an unknown electron donor, via FMN and iron-sulfur (Fe-S) centers, to quinones in the respiratory and/or the photosynthetic chain. The immediate electron acceptor for the enzyme in this species is believed to be plastoquinone. Couples the redox reaction to proton translocation, and thus conserves the redox energy in a proton gradient. Cyanobacterial NDH-1 also plays a role in inorganic carbon-concentration. The chain is NAD(P)H-quinone oxidoreductase subunit N from Prochlorococcus marinus (strain MIT 9211).